We begin with the raw amino-acid sequence, 239 residues long: Ribonuclease PH (239 aa).

Phosphate is bound by residues arginine 87 and 125 to 127 (GTR).

The protein belongs to the RNase PH family. In terms of assembly, homohexameric ring arranged as a trimer of dimers.

The catalysed reaction is tRNA(n+1) + phosphate = tRNA(n) + a ribonucleoside 5'-diphosphate. Phosphorolytic 3'-5' exoribonuclease that plays an important role in tRNA 3'-end maturation. Removes nucleotide residues following the 3'-CCA terminus of tRNAs; can also add nucleotides to the ends of RNA molecules by using nucleoside diphosphates as substrates, but this may not be physiologically important. Probably plays a role in initiation of 16S rRNA degradation (leading to ribosome degradation) during starvation. The protein is Ribonuclease PH of Pseudomonas aeruginosa (strain LESB58).